The sequence spans 62 residues: Large ribosomal subunit protein uL30 (62 aa).

This sequence belongs to the universal ribosomal protein uL30 family. In terms of assembly, part of the 50S ribosomal subunit.

This is Large ribosomal subunit protein uL30 from Cereibacter sphaeroides (strain ATCC 17029 / ATH 2.4.9) (Rhodobacter sphaeroides).